Consider the following 494-residue polypeptide: Probable cytosol aminopeptidase (494 aa).

Residues K260 and D265 each coordinate Mn(2+). The active site involves K272. The Mn(2+) site is built by D283, D342, and E344. R346 is a catalytic residue.

It belongs to the peptidase M17 family. The cofactor is Mn(2+).

The protein localises to the cytoplasm. It catalyses the reaction Release of an N-terminal amino acid, Xaa-|-Yaa-, in which Xaa is preferably Leu, but may be other amino acids including Pro although not Arg or Lys, and Yaa may be Pro. Amino acid amides and methyl esters are also readily hydrolyzed, but rates on arylamides are exceedingly low.. The catalysed reaction is Release of an N-terminal amino acid, preferentially leucine, but not glutamic or aspartic acids.. In terms of biological role, presumably involved in the processing and regular turnover of intracellular proteins. Catalyzes the removal of unsubstituted N-terminal amino acids from various peptides. The sequence is that of Probable cytosol aminopeptidase from Bacillus cereus (strain Q1).